The primary structure comprises 205 residues: DNA-directed RNA polymerases IV and V subunit 4 (205 aa).

The disordered stretch occupies residues 1-79; the sequence is MSEKGGKGLK…TKSSKNSLHS (79 aa). Residues 48–60 are compositionally biased toward polar residues; sequence NVSSDQQPFQSSA.

Belongs to the eukaryotic RPB4 RNA polymerase subunit family. Component of the RNA polymerase IV and V complexes. Interacts with NRPD1 and NRPE1. In terms of tissue distribution, expressed in shoot meristematic region and in root tips. Detected in cotyledons, flowers and young leaves.

The protein localises to the nucleus. DNA-dependent RNA polymerase catalyzes the transcription of DNA into RNA using the four ribonucleoside triphosphates as substrates. Component of RNA polymerases IV and V which mediate short-interfering RNAs (siRNA) accumulation and subsequent RNA-directed DNA methylation-dependent (RdDM) transcriptional gene silencing (TGS) of endogenous repeated sequences, including transposable elements. Required for the de novo DNA methylation directed by the RdDM pathway. This Arabidopsis thaliana (Mouse-ear cress) protein is DNA-directed RNA polymerases IV and V subunit 4 (NRPD4).